The following is a 347-amino-acid chain: MDLAANEISIYDKLSETVDLVRQTGHQCGMSEKAIEKFIRQLLEKNEPQRPPPQYPLLIVVYKVLATLGLILLTAYFVIQPFSPLAPEPVLSGAHTWRSLIHHIRLMSLPIAKKYMSENKGVPLHVGDEDRPFPDFDPWWTNDCEQNESEPIPANCTGCAQKHLKVMLLEDAPRKFERLHPLVIKTGKPLLSEEIQHFLCQYPEATEGFSEGFFAKWWRCFPERWFPFPYPWRRPLNRSQILRELFPVFTHLPFPKDASLNKCFFLHPEPVVGSKMHKMPDLFIIGSGEAMLQLIPPFQCRRHCQSVAMPIEPGDIGYVDTTHWKVYIIARGVQPLVICDGTAFSEL.

Residues 1 to 58 lie on the Cytoplasmic side of the membrane; the sequence is MDLAANEISIYDKLSETVDLVRQTGHQCGMSEKAIEKFIRQLLEKNEPQRPPPQYPLL. Residues 59-79 form a helical membrane-spanning segment; the sequence is IVVYKVLATLGLILLTAYFVI. Residues 80–347 are Extracellular-facing; it reads QPFSPLAPEP…ICDGTAFSEL (268 aa).

Homodimer. Interacts with BRS3. Interacts (via N-terminus) with SIN3B. In terms of processing, glycosylated.

The protein resides in the golgi apparatus membrane. The protein localises to the cytoplasm. Exhibits histone deacetylase (HDAC) enhancer properties. May play a role in cell cycle progression and wound repair of bronchial epithelial cells. The protein is Bombesin receptor-activated protein C6orf89 homolog of Pongo abelii (Sumatran orangutan).